The sequence spans 310 residues: Probable deoxyhypusine synthase (310 aa).

Residue Lys284 is the Nucleophile of the active site.

Belongs to the deoxyhypusine synthase family. Requires NAD(+) as cofactor.

It carries out the reaction [eIF5A protein]-L-lysine + spermidine = [eIF5A protein]-deoxyhypusine + propane-1,3-diamine. The protein operates within protein modification; eIF5A hypusination. Its function is as follows. Catalyzes the NAD-dependent oxidative cleavage of spermidine and the subsequent transfer of the butylamine moiety of spermidine to the epsilon-amino group of a specific lysine residue of the eIF-5A precursor protein to form the intermediate deoxyhypusine residue. In Thermoplasma volcanium (strain ATCC 51530 / DSM 4299 / JCM 9571 / NBRC 15438 / GSS1), this protein is Probable deoxyhypusine synthase (dys).